A 297-amino-acid polypeptide reads, in one-letter code: MNIIGSDRNTNIGGFMWKFKELIRDKTFRRWALSIILTIPTSVSTFISFLDLDARCRLIILLILVGLSLVIIIVQFIRLLFMNNITLNLNGSEVEIKKGDIFEVPRNNYKVIAFNEYFDTQVDDVIIARETLNGQYIKRYYSHQDITELDQKIKDDVKLKIEEKNVERPFGGKTTRYSLGSVFKDMDFFLVAFSKFDRENRAQLKLNEYASCMLNVWNEINTLHASKEVFIPLLGSGITRHVDSDVGVNELLHIMLWTFQISKVKFREPAKVTILLYKNDHKKINFYKLKEFEKNGL.

Transmembrane regions (helical) follow at residues Ala-32–Leu-52 and Arg-57–Ile-77.

Its subcellular location is the cell membrane. Its activity is regulated as follows. Activated by a signal molecule generated by ThsB. Functionally, probable membrane protein component of the Thoeris antiviral defense system, composed of ThsA and ThsB. Expression of ThsA and ThsB in B.subtilis (strain BEST7003) confers resistance to phages SBSphiC, SBSphiJ and SPO1. Activation by a signal generated by ThsB leads to phage resistance. This Bacillus amyloliquefaciens (strain Y2) (Bacillus amyloliquefaciens subsp. plantarum (strain B9601-Y2)) protein is Thoeris protein ThsA.